The primary structure comprises 631 residues: Glutamine--fructose-6-phosphate aminotransferase [isomerizing] (631 aa).

The active-site Nucleophile; for GATase activity is cysteine 2. In terms of domain architecture, Glutamine amidotransferase type-2 spans 2 to 225; it reads CGIVGYIGTQ…NGEIARLTPL (224 aa). SIS domains are found at residues 298–446 and 480–621; these read LDPQ…QRHS and LAHE…VDQP. Lysine 626 serves as the catalytic For Fru-6P isomerization activity.

In terms of assembly, homodimer.

Its subcellular location is the cytoplasm. The enzyme catalyses D-fructose 6-phosphate + L-glutamine = D-glucosamine 6-phosphate + L-glutamate. Catalyzes the first step in hexosamine metabolism, converting fructose-6P into glucosamine-6P using glutamine as a nitrogen source. The polypeptide is Glutamine--fructose-6-phosphate aminotransferase [isomerizing] (Synechocystis sp. (strain ATCC 27184 / PCC 6803 / Kazusa)).